We begin with the raw amino-acid sequence, 1905 residues long: von Willebrand factor A domain-containing protein 8 (1905 aa).

Residues 1-45 constitute a mitochondrion transit peptide; that stretch reads MQSRLLLLGAPGGLGDVASRRVRLLLRQVLRGRPGGDQQRLEVRL. Residues 1–260 are interaction with PEX7; that stretch reads MQSRLLLLGA…PLDPPLRSRF (260 aa). 446 to 453 contacts ATP; it reads GGKGCGKT. A compositionally biased stretch (basic and acidic residues) spans 1541 to 1560; that stretch reads ERDSNEDVSDPKHGKEDPDN. The tract at residues 1541-1583 is disordered; that stretch reads ERDSNEDVSDPKHGKEDPDNMPHVGGNTWAGGTGGRDTAGLGG. Over residues 1568-1583 the composition is skewed to gly residues; it reads TWAGGTGGRDTAGLGG. Positions 1714–1896 constitute a VWFA domain; that stretch reads RLRLVVDVSG…KKIPQILQQI (183 aa).

Monomer. Interacts with PEX7. Interacts with PEX5 in a PEX7-dependent manner. In terms of tissue distribution, isoform 1 is predominantly expressed in liver, kidney, pancreas, heart, and skeletal muscle (at protein level).

The protein localises to the mitochondrion. Exhibits ATPase activity in vitro. The chain is von Willebrand factor A domain-containing protein 8 (Vwa8) from Mus musculus (Mouse).